Here is a 616-residue protein sequence, read N- to C-terminus: 2-[(L-alanin-3-ylcarbamoyl)methyl]-3-(2-aminoethylcarbamoyl)-2-hydroxypropanoate synthase (616 aa).

This sequence belongs to the IucA/IucC family. In terms of assembly, forms a mixture of monomer and dimer in solution.

It carries out the reaction 2-[(2-aminoethylcarbamoyl)methyl]-2-hydroxybutanedioate + (S)-2,3-diaminopropanoate + ATP = 2-[(L-alanin-3-ylcarbamoyl)methyl]-3-(2-aminoethylcarbamoyl)-2-hydroxypropanoate + AMP + diphosphate. Its pathway is siderophore biosynthesis. Its function is as follows. Catalyzes the condensation of L-2,3-diaminopropionic acid (L-Dap) and citryl-diaminoethane to form L-2,3-diaminopropionyl-citryl-diaminoethane, the third step in staphyloferrin B biosynthesis. This is 2-[(L-alanin-3-ylcarbamoyl)methyl]-3-(2-aminoethylcarbamoyl)-2-hydroxypropanoate synthase from Staphylococcus aureus (strain NCTC 8325 / PS 47).